We begin with the raw amino-acid sequence, 269 residues long: Phosphate import ATP-binding protein PstB 2 (269 aa).

An ABC transporter domain is found at 23–264 (LEVKDLSIYY…PKKQKTEDYI (242 aa)). 55–62 (GPSGCGKS) is a binding site for ATP.

It belongs to the ABC transporter superfamily. Phosphate importer (TC 3.A.1.7) family. As to quaternary structure, the complex is composed of two ATP-binding proteins (PstB), two transmembrane proteins (PstC and PstA) and a solute-binding protein (PstS).

The protein resides in the cell membrane. The enzyme catalyses phosphate(out) + ATP + H2O = ADP + 2 phosphate(in) + H(+). Its function is as follows. Part of the ABC transporter complex PstSACB involved in phosphate import. Responsible for energy coupling to the transport system. This Bacillus subtilis (strain 168) protein is Phosphate import ATP-binding protein PstB 2.